Here is a 304-residue protein sequence, read N- to C-terminus: MHLKGKSPMNYIGRFAPSPSGPLHFGSLIAALGSYFQAKAQQGTWLVRIEDLDPPREMPGAAAHILRTLEAYRLHWDGTVVYQSQRHALYQDQIDAWLSTGQAYYCQCTRKAIKAMGGFYNGHCKIHPPARQQDCSIRLRMDNQVQQFIDLKHGTITIPKALAEEDFIIKRRDGLFAYNLAVVLDDIDQGVTQVVRGADLIEPTGRQISLYHTLKQKPVSYLHLPLAMDGNGNKLSKQNHAPAIDPTAPRQTISHAMQFLGFTLPTDFSDASAEQMLAWGCQHWQVSQLPEAIEITPRFSNGPA.

L-glutamate contacts are provided by residues 14-18 and E50; that span reads RFAPS. Positions 17–27 match the 'HIGH' region motif; sequence PSPSGPLHFGS. The Zn(2+) site is built by C106, C108, Y120, and C124. L-glutamate-binding residues include Y178 and R196. Positions 234 to 238 match the 'KMSKS' region motif; that stretch reads KLSKQ. K237 contacts ATP.

This sequence belongs to the class-I aminoacyl-tRNA synthetase family. GluQ subfamily. Requires Zn(2+) as cofactor.

Its function is as follows. Catalyzes the tRNA-independent activation of glutamate in presence of ATP and the subsequent transfer of glutamate onto a tRNA(Asp). Glutamate is transferred on the 2-amino-5-(4,5-dihydroxy-2-cyclopenten-1-yl) moiety of the queuosine in the wobble position of the QUC anticodon. This Vibrio cholerae serotype O1 (strain ATCC 39315 / El Tor Inaba N16961) protein is Glutamyl-Q tRNA(Asp) synthetase.